The chain runs to 233 residues: Choline-phosphate cytidylyltransferase (233 aa).

The CDP-choline site is built by leucine 6, alanine 8, glycine 9, tyrosine 80, serine 85, and alanine 101. Position 102 (aspartate 102) interacts with Mg(2+). Tyrosine 187 lines the CDP-choline pocket. The Mg(2+) site is built by glutamate 213 and aspartate 215.

It belongs to the LicC/PntC cytidylyltransferase family. It depends on Mg(2+) as a cofactor.

The catalysed reaction is phosphocholine + CTP + H(+) = CDP-choline + diphosphate. The protein operates within lipopolysaccharide biosynthesis. In terms of biological role, cytidylyltransferase involved in the biosynthesis of lipopolysaccharides (LPS), a necessary component and antigenic determinant of the outer membrane that has been shown to be an important factor in the host-parasite interaction in a number of Gram-negative species. Catalyzes the activation of phosphocholine (P-Cho) to CDP-choline (CDP-Cho). LicC is critical for the expression of the 6A2-specific epitope. This Haemophilus influenzae (strain ATCC 51907 / DSM 11121 / KW20 / Rd) protein is Choline-phosphate cytidylyltransferase.